The chain runs to 367 residues: Phosphoribosylaminoimidazole-succinocarboxamide synthase (367 aa).

Belongs to the SAICAR synthetase family.

The catalysed reaction is 5-amino-1-(5-phospho-D-ribosyl)imidazole-4-carboxylate + L-aspartate + ATP = (2S)-2-[5-amino-1-(5-phospho-beta-D-ribosyl)imidazole-4-carboxamido]succinate + ADP + phosphate + 2 H(+). Its pathway is purine metabolism; IMP biosynthesis via de novo pathway; 5-amino-1-(5-phospho-D-ribosyl)imidazole-4-carboxamide from 5-amino-1-(5-phospho-D-ribosyl)imidazole-4-carboxylate: step 1/2. The polypeptide is Phosphoribosylaminoimidazole-succinocarboxamide synthase (Shewanella halifaxensis (strain HAW-EB4)).